The sequence spans 1849 residues: MLNKKFKLNFIALTVAYALTPYTEAALVRDDVDYQIFRDFAENKGKFSVGATNVEVRDKKNQSLGSALPNGIPMIDFSVVDVDKRIATLVNPQYVVGVKHVSNGVSELHFGNLNGNMNNGNAKSHRDVSSEENRYYTVEKNNFPTENVTSFTTKEEQDAQKRREDYYMPRLDKFVTEVAPIEASTANNNKGEYNNSDKYPAFVRLGSGSQFIYKKGSRYQLILTEKDKQGNLLRNWDVGGDNLELVGNAYTYGIAGTPYKVNHENNGLIGFGNSKEEHSDPKGILSQDPLTNYAVLGDSGSPLFVYDREKGKWLFLGSYDFWAGYNKKSWQEWNIYKHEFAEKIYQQYSAGSLTGSNTQYTWQATGSTSTITGGGEPLSVDLTDGKDKPNHGKSITLKGSGTLTLNNHIDQGAGGLFFEGDYEVKGTSDSTTWKGAGVSVADGKTVTWKVHNPKYDRLAKIGKGTLVVEGKGKNEGLLKVGDGTVILKQKADANNKVQAFSQVGIVSGRSTLVLNDDKQVDPNSIYFGFRGGRLDLNGNSLTFDHIRNIDDGARVVNHNMTNTSNITITGESLITNPNTITSYNIEAQDDDHPLRIRSIPYRQLYFNQDNRSYYTLKKGASTRSELPQNSGESNENWLYMGRTSDEAKRNVMNHINNERMNGFNGYFGEEETKATQNGKLNVTFNGKSDQNRFLLTGGTNLNGDLNVEKGTLFLSGRPTPHARDIAGISSTKKDPHFTENNEVVVEDDWINRNFKATTMNVTGNASLYSGRNVANITSNITASNNAQVHIGYKTGDTVCVRSDYTGYVTCHNSNLSEKALNSFNPTNLRGNVNLTENASFTLGKANLFGTIQSIGTSQVNLKENSHWHLTGNSNVNQLNLTNGHIHLNAQNDANKVTTYNTLTVNSLSGNGSFYYWVDFTNNKSNKVVVNKSATGNFTLQVADKTGEPNHNELTLFDASNATRNNLEVTLANGSVDRGAWKYKLRNVNGRYDLYNPEVEKRNQTVDTTNITTPNDIQADAPSAQSNNEEIARVETPVPPPAPATESAIASEQPETRPAETAQPAMEETNTANSTETAPKSDTATQTENPNSESVPSETTEKVAENPPQENETVAKNEQEATEPTPQNGEVAKEDQPTVEANTQTNEATQSEGKTEETQTAETKSEPTESVTVSENQPEKTVSQSTEDKVVVEKEEKAKVETEETQKAPQVTSKEPPKQAEPAPEEVPTDTNAEEAQALQQTQPTTVAAAETTSPNSKPAEETQQPSEKTNAEPVTPVVSENTATQPTETEETAKVEKEKTQEVPQVASQESPKQEQPAAKPQAQTKPQAEPARENVLTTKNVGEPQPQAQPQTQSTAVPTTGETAANSKPAAKPQAQAKPQTEPARENVSTVNTKEPQSQTSATVSTEQPAKETSSNVEQPAPENSINTGSATTMTETAEKSDKPQMETVTENDRQPEANTVADNSVANNSESSESKSRRRRSVSQPKETSAEETTVASTQETTVDNSVSTPKPRSRRTRRSVQTNSYEPVELPTENAENAENVQSGNNVANSQPALRNLTSKNTNAVLSNAMAKAQFVALNVGKAVSQHISQLEMNNEGQYNVWISNTSMNKNYSSEQYRRFSSKSTQTQLGWDQTISNNVQLGGVFTYVRNSNNFDKASSKNTLAQVNFYSKYYADNHWYLGIDLGYGKFQSNLQTNNNAKFARHTAQIGLTAGKAFNLGNFAVKPTVGVRYSYLSNADFALAQDRIKVNPISVKTAFAQVDLSYTYHLGEFSITPILSARYDANQGNGKINVSVYDFAYNVENQQQYNAGLKLKYHNVKLSLIGGLTKAKQAEKQKTAEVKLSFSF.

Residues 1-25 (MLNKKFKLNFIALTVAYALTPYTEA) form the signal peptide. A Peptidase S6 domain is found at 26-343 (ALVRDDVDYQ…NIYKHEFAEK (318 aa)). Ser299 is a catalytic residue. Residues 998–1538 (VEKRNQTVDT…EPVELPTENA (541 aa)) form a disordered region. The span at 1004–1015 (TVDTTNITTPND) shows a compositional bias: polar residues. The span at 1066–1077 (EETNTANSTETA) shows a compositional bias: low complexity. Composition is skewed to polar residues over residues 1079–1097 (KSDT…VPSE) and 1138–1151 (VEAN…TQSE). A compositionally biased stretch (basic and acidic residues) spans 1152–1166 (GKTEETQTAETKSEP). Residues 1167 to 1184 (TESVTVSENQPEKTVSQS) are compositionally biased toward polar residues. The segment covering 1185 to 1205 (TEDKVVVEKEEKAKVETEETQ) has biased composition (basic and acidic residues). The span at 1237–1268 (ALQQTQPTTVAAAETTSPNSKPAEETQQPSEK) shows a compositional bias: polar residues. Basic and acidic residues predominate over residues 1291-1301 (ETAKVEKEKTQ). Composition is skewed to low complexity over residues 1314 to 1330 (QEQP…PQAE), 1345 to 1361 (PQPQ…VPTT), and 1369 to 1381 (KPAA…AKPQ). Polar residues predominate over residues 1388–1437 (NVSTVNTKEPQSQTSATVSTEQPAKETSSNVEQPAPENSINTGSATTMTE). Residues 1438 to 1457 (TAEKSDKPQMETVTENDRQP) show a composition bias toward basic and acidic residues. Over residues 1493–1513 (EETTVASTQETTVDNSVSTPK) the composition is skewed to low complexity. Positions 1597-1849 (NNEGQYNVWI…TAEVKLSFSF (253 aa)) constitute an Autotransporter domain.

The protein resides in the periplasm. It is found in the secreted. Its subcellular location is the cell surface. The protein localises to the cell outer membrane. The catalysed reaction is Cleavage of immunoglobulin A molecules at certain Pro-|-Xaa bonds in the hinge region. No small molecule substrates are known.. Virulence factor; cleaves host immunoglobulin A producing intact Fc and Fab fragments. The protein is Immunoglobulin A1 protease autotransporter (iga) of Haemophilus influenzae.